Consider the following 235-residue polypeptide: Lipoprotein signal peptidase (235 aa).

Positions 1–23 (MTDETSGPAEPVTDAPGDAESPA) are disordered. The next 3 membrane-spanning stretches (helical) occupy residues 31-51 (LLLT…VLAV), 84-104 (GYTW…IWMG), and 108-128 (VSPW…GNLV). Catalysis depends on residues D144 and D158. The helical transmembrane segment at 156–176 (VADPSVVGGAILLVALSLFGF) threads the bilayer. A disordered region spans residues 185 to 235 (RPGEDAEPSAGASDSTPEAPAADGPDKPAGPVGPEDAAEESKTVGHQAEPS). Residues 201 to 218 (PEAPAADGPDKPAGPVGP) show a composition bias toward low complexity.

This sequence belongs to the peptidase A8 family.

It localises to the cell membrane. It carries out the reaction Release of signal peptides from bacterial membrane prolipoproteins. Hydrolyzes -Xaa-Yaa-Zaa-|-(S,diacylglyceryl)Cys-, in which Xaa is hydrophobic (preferably Leu), and Yaa (Ala or Ser) and Zaa (Gly or Ala) have small, neutral side chains.. The protein operates within protein modification; lipoprotein biosynthesis (signal peptide cleavage). In terms of biological role, this protein specifically catalyzes the removal of signal peptides from prolipoproteins. This chain is Lipoprotein signal peptidase, found in Mycolicibacterium smegmatis (strain ATCC 700084 / mc(2)155) (Mycobacterium smegmatis).